The following is a 1572-amino-acid chain: MPVGVEARASWRVVALTLLLLPAVPAASQPLPPRPLQPSMPHVCAEQKLTLVGHRQPCVQAFSRVVPVWRSGCGQQAWCVGQERRTVYYMSYRQVYATEARTVFRCCPGWSQKPGQEGCLSDVDECANANGGCEGPCCNTVGGFYCRCPPGYQLQGDGKTCQDVDECRSHNGGCQHRCVNTPGSYLCECKPGFRLHTDGRTCLAISSCTLGNGGCQHQCVQLTVTQHRCQCRPQYQLQEDGRRCVRRSPCADGNGGCMHTCQELRGLAHCGCHPGYQLAADRKACEDVDECALGLAQCAHGCLNTQGSFKCVCHAGYELGADGRQCYRIEMEIVNSCEAGNGGCSHGCSHTSTGPLCTCPRGYELDEDQKTCIDIDDCANSPCCQQVCANTPGGYECSCFAGYRLNTDGCGCEDVDECASGHSGCEHHCSNLAGSFQCFCEAGYRLDEDRRGCTPLEESVVDLDGQLPFVRPLPHIAVLGDELPQLFQDDYGAEEEAVAELRGEHTLTEKFVCLDHSFGHDCSLTCDDCRNGGTCFPGLDGCDCPEGWTGIICNETCPPDTFGKNCSSPCICQNGGTCDPVSGACRCPPGVSGAHCEDGCPKGFYGKHCRKKCHCANRGRCHRLYGACLCDPGLYGRFCHLACPPWAFGPGCSEDCLCEQSHTRSCNSKDGSCSCKAGFQGERCEAECEPGSFGPGCRNRCTCRPGVACDPVSGECRTQCPPGYQGEDCGQECPVGTFGVNCSGSCSCVGAPCHRVTGECLCPPGKTGEDCGADCPEGRWGLGCQEICPACEHGASCDPETGTCLCLPGFVGSRCQDACPAGWFGTGCQMRCACANDGHCHPATGRCSCAPGWTGLSCQRACDSGHWGPDCIHPCNCSAGHGNCDAVSGLCLCEAGYEGPQCEQWCRQGYFGPGCEQKCRCEHGATCDHVSGACTCPAGWRGSFCEHACPAGFFGLDCGSACNCSAGAPCDAVTGSCICPAGRWGPHCAQTCPPLTFGLNCSQICTCFNGASCDPVLGQCHCAPGWMGPTCLQACPAGLYGKNCQHSCLCRNGGSCDPILGQCTCPEGWTGLACENECLPGHHGAGCRLNCSCLNGGTCDRLTGHCRCPAGWTGDKCQSPCVSGMFGVHCEEHCACRKGATCHHVTGACLCPPGWRGSHCEQACPRGWFGEACAQRCHCPPGASCHHVSGECHCPPGFTGPGCEQACQPGTFGKDCEHPCQCPGETWACHPASGACVCAAGYHGTDCQQRCPSGRYGPGCEQICKCLNGGTCDPATGACYCPAGFLGADCSLACPQGRFGPSCAHVCTCGQGAACDPVSGTCICPPGKTGGHCERGCPQDRFGKGCEHKCACRNGGLCHATNGSCSCPLGWMGPHCEHACPAGRYGAACLLECSCQNNGSCEPTSGACLCGPGFYGQACEDTCPAGFHGSGCQRVCECQQGAPCDPVSGRCLCPAGFRGQFCERGCKPGFFGDGCLQQCNSPTGVPCDPISGLCLCPPGRAGTTCDLDCRRGRFGPGCALRCDCGGGADCDPISGQCHCVDSYTGPTCREVPTQLSSIRPAPQHSSSKAMKH.

An N-terminal signal peptide occupies residues 1–26 (MPVGVEARASWRVVALTLLLLPAVPA). Positions 40–121 (MPHVCAEQKL…QKPGQEGCLS (82 aa)) constitute an EMI domain. Cystine bridges form between cysteine 44/cysteine 107, cysteine 73/cysteine 79, cysteine 106/cysteine 119, cysteine 126/cysteine 137, cysteine 133/cysteine 146, cysteine 148/cysteine 161, cysteine 167/cysteine 178, cysteine 174/cysteine 187, cysteine 189/cysteine 202, cysteine 291/cysteine 302, cysteine 298/cysteine 311, cysteine 313/cysteine 326, cysteine 418/cysteine 429, cysteine 425/cysteine 438, cysteine 440/cysteine 453, cysteine 522/cysteine 535, cysteine 529/cysteine 542, cysteine 544/cysteine 553, cysteine 566/cysteine 578, cysteine 572/cysteine 585, cysteine 587/cysteine 596, cysteine 609/cysteine 621, cysteine 615/cysteine 628, cysteine 630/cysteine 639, cysteine 788/cysteine 797, cysteine 791/cysteine 804, cysteine 806/cysteine 815, cysteine 832/cysteine 840, cysteine 834/cysteine 847, cysteine 849/cysteine 858, cysteine 871/cysteine 884, cysteine 875/cysteine 891, cysteine 893/cysteine 902, cysteine 915/cysteine 927, cysteine 921/cysteine 934, and cysteine 936/cysteine 945. Positions 122–162 (DVDECANANGGCEGPCCNTVGGFYCRCPPGYQLQGDGKTCQ) constitute an EGF-like 1; calcium-binding domain. In terms of domain architecture, EGF-like 2; calcium-binding spans 163-203 (DVDECRSHNGGCQHRCVNTPGSYLCECKPGFRLHTDGRTCL). One can recognise an EGF-like 3; calcium-binding domain in the interval 287-327 (DVDECALGLAQCAHGCLNTQGSFKCVCHAGYELGADGRQCY). Residues 414–454 (DVDECASGHSGCEHHCSNLAGSFQCFCEAGYRLDEDRRGCT) enclose the EGF-like 4; calcium-binding domain. EGF-like domains are found at residues 518–554 (FGHD…IICN), 562–597 (FGKN…AHCE), 605–640 (YGKH…RFCH), 785–816 (QEIC…SRCQ), 829–859 (QMRC…LSCQ), 867–903 (WGPD…PQCE), 911–946 (FGPG…SFCE), 997–1032 (FGLN…PTCL), 1040–1075 (YGKN…LACE), 1083–1118 (HGAG…DKCQ), 1131–1161 (EEHC…SHCE), 1169–1204 (FGEA…PGCE), 1256–1291 (YGPG…ADCS), 1299–1334 (FGPS…GHCE), 1342–1377 (FGKG…PHCE), 1390–1420 (LLEC…QACE), and 1428–1463 (HGSG…QFCE). Asparagine 1000 carries N-linked (GlcNAc...) asparagine glycosylation. Cystine bridges form between cysteine 1001/cysteine 1013, cysteine 1007/cysteine 1020, cysteine 1022/cysteine 1031, cysteine 1044/cysteine 1056, cysteine 1050/cysteine 1063, cysteine 1065/cysteine 1074, cysteine 1087/cysteine 1099, cysteine 1093/cysteine 1106, cysteine 1108/cysteine 1117, cysteine 1134/cysteine 1142, cysteine 1136/cysteine 1149, cysteine 1151/cysteine 1160, cysteine 1173/cysteine 1185, cysteine 1177/cysteine 1192, cysteine 1194/cysteine 1203, cysteine 1260/cysteine 1272, cysteine 1266/cysteine 1279, cysteine 1281/cysteine 1290, cysteine 1303/cysteine 1315, cysteine 1309/cysteine 1322, cysteine 1324/cysteine 1333, cysteine 1346/cysteine 1358, cysteine 1352/cysteine 1365, cysteine 1367/cysteine 1376, cysteine 1393/cysteine 1401, cysteine 1395/cysteine 1408, cysteine 1410/cysteine 1419, cysteine 1432/cysteine 1444, cysteine 1438/cysteine 1451, and cysteine 1453/cysteine 1462.

The protein localises to the secreted. In Mus musculus (Mouse), this protein is Multiple epidermal growth factor-like domains protein 6 (Megf6).